We begin with the raw amino-acid sequence, 1123 residues long: Adenylyl cyclase X E (1123 aa).

At M1–Y47 the chain is on the cytoplasmic side. Residues L48 to A68 form a helical membrane-spanning segment. The Extracellular portion of the chain corresponds to T69–R73. A helical membrane pass occupies residues S74 to L94. Residues S95–H106 lie on the Cytoplasmic side of the membrane. The helical transmembrane segment at T107–T127 threads the bilayer. Topologically, residues E128–S137 are extracellular. A helical transmembrane segment spans residues W138–I158. The Cytoplasmic segment spans residues H159–G163. The chain crosses the membrane as a helical span at residues A164 to A184. The Extracellular portion of the chain corresponds to Q185 to S196. Residues V197–Y217 traverse the membrane as a helical segment. Over R218–K581 the chain is Cytoplasmic. ATP is bound by residues L346–D348 and R392. D348 lines the Mg(2+) pocket. A helical transmembrane segment spans residues Y582–T602. Residues Q603 to S608 lie on the Extracellular side of the membrane. The chain crosses the membrane as a helical span at residues C609 to Y629. Residues K630–R667 are Cytoplasmic-facing. A helical transmembrane segment spans residues I668–S688. Over C689 to T719 the chain is Extracellular. The helical transmembrane segment at T720–V740 threads the bilayer. Topologically, residues K741–A743 are cytoplasmic. A helical transmembrane segment spans residues V744 to F764. The Extracellular portion of the chain corresponds to H765–P772. Residues Y773 to V793 form a helical membrane-spanning segment. Over K794–L1123 the chain is Cytoplasmic. Residues K903, D1014–W1016, N1021–R1025, and K1061 each bind ATP.

This sequence belongs to the adenylyl cyclase class-4/guanylyl cyclase family. Expressed in labella.

It localises to the membrane. The enzyme catalyses ATP = 3',5'-cyclic AMP + diphosphate. Functionally, catalyzes the formation of the signaling molecule cAMP in response to G-protein signaling. This Drosophila melanogaster (Fruit fly) protein is Adenylyl cyclase X E.